A 155-amino-acid chain; its full sequence is Small ribosomal subunit protein uS7cz/uS7cy (155 aa).

Belongs to the universal ribosomal protein uS7 family. In terms of assembly, part of the 30S ribosomal subunit.

Its subcellular location is the plastid. It is found in the chloroplast. Its function is as follows. One of the primary rRNA binding proteins, it binds directly to 16S rRNA where it nucleates assembly of the head domain of the 30S subunit. This chain is Small ribosomal subunit protein uS7cz/uS7cy (rps7-A), found in Phaseolus vulgaris (Kidney bean).